The primary structure comprises 783 residues: Isoamylase 1, chloroplastic (783 aa).

Residues 1-43 (MDAIKCSSSFLHHTKLNTLFSNHTFPKISAPNFKPLFRPISIS) constitute a chloroplast transit peptide. Residue Asp410 is the Nucleophile of the active site. The active-site Proton donor is Glu466.

This sequence belongs to the glycosyl hydrolase 13 family. Associates with ISA2 to form the heteromultimeric complex Iso1 required for amylopectin synthesis.

It localises to the plastid. The protein resides in the chloroplast. It catalyses the reaction Hydrolysis of (1-&gt;6)-alpha-D-glucosidic branch linkages in glycogen, amylopectin and their beta-limit dextrins.. It functions in the pathway glycan biosynthesis; starch biosynthesis. Its function is as follows. Involved in the trimming of pre-amylopectin chains. Accelerates the crystallization of nascent amylopectin molecules during starch synthesis. ISA1 and ISA2 work exclusively together as a multimeric holoenzyme. ISA1-ISA2 removes preferentially branches that are very close to other branches. Promotes negative gravitropic responses in shoots by facilitating starch granules (statoliths) formation in hypocotyls. The sequence is that of Isoamylase 1, chloroplastic from Arabidopsis thaliana (Mouse-ear cress).